The sequence spans 335 residues: Tetraacyldisaccharide 4'-kinase (335 aa).

Residue threonine 59 to threonine 66 coordinates ATP.

It belongs to the LpxK family.

It carries out the reaction a lipid A disaccharide + ATP = a lipid IVA + ADP + H(+). It functions in the pathway glycolipid biosynthesis; lipid IV(A) biosynthesis; lipid IV(A) from (3R)-3-hydroxytetradecanoyl-[acyl-carrier-protein] and UDP-N-acetyl-alpha-D-glucosamine: step 6/6. Its function is as follows. Transfers the gamma-phosphate of ATP to the 4'-position of a tetraacyldisaccharide 1-phosphate intermediate (termed DS-1-P) to form tetraacyldisaccharide 1,4'-bis-phosphate (lipid IVA). This Aliivibrio salmonicida (strain LFI1238) (Vibrio salmonicida (strain LFI1238)) protein is Tetraacyldisaccharide 4'-kinase.